A 170-amino-acid chain; its full sequence is Ureidoglycolate lyase (170 aa).

It belongs to the ureidoglycolate lyase family. In terms of assembly, homodimer. Requires Ni(2+) as cofactor.

The enzyme catalyses (S)-ureidoglycolate = urea + glyoxylate. It functions in the pathway nitrogen metabolism; (S)-allantoin degradation. Catalyzes the catabolism of the allantoin degradation intermediate (S)-ureidoglycolate, generating urea and glyoxylate. Involved in the utilization of allantoin as nitrogen source. This is Ureidoglycolate lyase from Burkholderia mallei (strain NCTC 10247).